The primary structure comprises 620 residues: Transcription factor GTE11 (620 aa).

The disordered stretch occupies residues 1-35 (MTVRNGGFPGDYNRNSFDSPGGCDDSPNASKDDET). One can recognise a Bromo domain in the interval 124–230 (TSTMLRMKQC…KFFEVRWKTI (107 aa)). Residues 270-351 (NSLLEPAKRV…EFLRENQKKD (82 aa)) form the NET domain. Ser-417 carries the post-translational modification Phosphoserine. Residues 445–620 (EKRYRAALLK…GNEVEEGEID (176 aa)) form a transcription activation domain region. The stretch at 470–544 (NQNEKRDPET…MEKSVEINEN (75 aa)) forms a coiled coil. 2 disordered regions span residues 491 to 511 (KKKE…ARRK) and 597 to 620 (EDED…GEID).

As to quaternary structure, interacts with BT1, BT2 and BT4.

It localises to the nucleus. This chain is Transcription factor GTE11 (GTE11), found in Arabidopsis thaliana (Mouse-ear cress).